Consider the following 67-residue polypeptide: Potassium channel toxin alpha-KTx (67 aa).

Positions 1–25 (MKNIAMKTTVVLTILLLSVLTAINA) are cleaved as a signal peptide. A propeptide spanning residues 26 to 31 (DTMKKR) is cleaved from the precursor. Intrachain disulfides connect Cys-35–Cys-54, Cys-40–Cys-59, Cys-44–Cys-61, and Cys-49–Cys-64.

It belongs to the short scorpion toxin superfamily. Potassium channel inhibitor family. As to expression, expressed by the venom gland.

The protein localises to the secreted. Its function is as follows. Blocks Kv1.1/KCNA1, Kv1.2/KCNA2 and Kv1.3/KCNA3 voltage-gated potassium channels. The protein is Potassium channel toxin alpha-KTx of Hoffmannihadrurus gertschi (Scorpion).